The sequence spans 113 residues: DIVMTQTAPSALVTPGESVSISCRSSKSLLHSNGNTYLYWFLQRPGQCPQLLIYRMSNLASGVPDRFSGSGSGTAFTLRISRVEAEDVGVYYCMQQREYPYTFGGGTKLEIKR.

The framework-1 stretch occupies residues 1 to 23 (DIVMTQTAPSALVTPGESVSISC). A disulfide bond links Cys23 and Cys93. The tract at residues 24 to 39 (RSSKSLLHSNGNTYLY) is complementarity-determining-1. A framework-2 region spans residues 40–54 (WFLQRPGQCPQLLIY). Positions 55–61 (RMSNLAS) are complementarity-determining-2. Positions 62–93 (GVPDRFSGSGSGTAFTLRISRVEAEDVGVYYC) are framework-3. Positions 94–102 (MQQREYPYT) are complementarity-determining-3. Positions 103-112 (FGGGTKLEIK) are framework-4.

The protein is Ig kappa chain V-II region 7S34.1 of Mus musculus (Mouse).